An 84-amino-acid polypeptide reads, in one-letter code: Putative defensin-like protein 38 (84 aa).

The signal sequence occupies residues 1–26 (MASSKNGTVLFVSLMILLLISTGVKA). 4 cysteine pairs are disulfide-bonded: C28–C84, C41–C65, C50–C76, and C54–C78.

This sequence belongs to the DEFL family.

The protein localises to the secreted. The polypeptide is Putative defensin-like protein 38 (Arabidopsis thaliana (Mouse-ear cress)).